Here is a 140-residue protein sequence, read N- to C-terminus: uncharacterized protein (140 aa).

N-linked (GlcNAc...) asparagine glycosylation is present at Asn-36. Residues 91 to 107 (LFMSLIGLCVCYMNLVF) traverse the membrane as a helical segment. Over residues 113–122 (QPSSSGSKGN) the composition is skewed to polar residues. Positions 113-140 (QPSSSGSKGNTETTIETTTEVETETAKQ) are disordered. Acidic residues predominate over residues 131–140 (TEVETETAKQ).

The protein localises to the endoplasmic reticulum membrane. This is an uncharacterized protein from Saccharomyces cerevisiae (strain ATCC 204508 / S288c) (Baker's yeast).